The following is a 284-amino-acid chain: Thymidylate synthase (284 aa).

Residue R34 participates in dUMP binding. (6R)-5,10-methylene-5,6,7,8-tetrahydrofolate is bound at residue H64. 139-140 (RR) contacts dUMP. Catalysis depends on C159, which acts as the Nucleophile. Residues 186–189 (RSAD), N197, and 227–229 (HIY) contribute to the dUMP site. D189 is a (6R)-5,10-methylene-5,6,7,8-tetrahydrofolate binding site. A283 is a (6R)-5,10-methylene-5,6,7,8-tetrahydrofolate binding site.

This sequence belongs to the thymidylate synthase family. Bacterial-type ThyA subfamily. In terms of assembly, homodimer.

The protein localises to the cytoplasm. The catalysed reaction is dUMP + (6R)-5,10-methylene-5,6,7,8-tetrahydrofolate = 7,8-dihydrofolate + dTMP. Its pathway is pyrimidine metabolism; dTTP biosynthesis. Its function is as follows. Catalyzes the reductive methylation of 2'-deoxyuridine-5'-monophosphate (dUMP) to 2'-deoxythymidine-5'-monophosphate (dTMP) while utilizing 5,10-methylenetetrahydrofolate (mTHF) as the methyl donor and reductant in the reaction, yielding dihydrofolate (DHF) as a by-product. This enzymatic reaction provides an intracellular de novo source of dTMP, an essential precursor for DNA biosynthesis. In Polaromonas sp. (strain JS666 / ATCC BAA-500), this protein is Thymidylate synthase.